Reading from the N-terminus, the 330-residue chain is ADP-L-glycero-D-manno-heptose-6-epimerase (330 aa).

Residues 11-12 (FI), 32-33 (DN), lysine 39, lysine 54, 75-79 (EGACS), and asparagine 92 each bind NADP(+). The Proton acceptor role is filled by tyrosine 139. Lysine 143 contacts NADP(+). Asparagine 168 serves as a coordination point for substrate. NADP(+) is bound by residues valine 169 and lysine 177. Residue lysine 177 is the Proton acceptor of the active site. Residues arginine 179, histidine 186, 200 to 203 (FGEY), arginine 213, and tyrosine 292 contribute to the substrate site.

This sequence belongs to the NAD(P)-dependent epimerase/dehydratase family. HldD subfamily. Homopentamer. Requires NADP(+) as cofactor.

It catalyses the reaction ADP-D-glycero-beta-D-manno-heptose = ADP-L-glycero-beta-D-manno-heptose. It participates in nucleotide-sugar biosynthesis; ADP-L-glycero-beta-D-manno-heptose biosynthesis; ADP-L-glycero-beta-D-manno-heptose from D-glycero-beta-D-manno-heptose 7-phosphate: step 4/4. In terms of biological role, catalyzes the interconversion between ADP-D-glycero-beta-D-manno-heptose and ADP-L-glycero-beta-D-manno-heptose via an epimerization at carbon 6 of the heptose. The polypeptide is ADP-L-glycero-D-manno-heptose-6-epimerase (Paraburkholderia phytofirmans (strain DSM 17436 / LMG 22146 / PsJN) (Burkholderia phytofirmans)).